A 117-amino-acid polypeptide reads, in one-letter code: Large ribosomal subunit protein uL22 (117 aa).

It belongs to the universal ribosomal protein uL22 family. In terms of assembly, part of the 50S ribosomal subunit.

Functionally, this protein binds specifically to 23S rRNA; its binding is stimulated by other ribosomal proteins, e.g. L4, L17, and L20. It is important during the early stages of 50S assembly. It makes multiple contacts with different domains of the 23S rRNA in the assembled 50S subunit and ribosome. The globular domain of the protein is located near the polypeptide exit tunnel on the outside of the subunit, while an extended beta-hairpin is found that lines the wall of the exit tunnel in the center of the 70S ribosome. This chain is Large ribosomal subunit protein uL22, found in Lacticaseibacillus casei (strain BL23) (Lactobacillus casei).